A 226-amino-acid chain; its full sequence is Thioredoxin domain-containing protein 9 (226 aa).

The region spanning 75 to 180 (EIGSERDFFQ…TTETLEWRLG (106 aa)) is the Thioredoxin domain. Phosphoserine occurs at positions 188, 221, and 223.

In terms of assembly, forms ternary complexes with the chaperonin TCP1 complex, spanning the cylindrical chaperonin cavity and contacting at least 2 subunits. As to expression, expressed in testis, liver, heart, kidney, brain, spleen and lung.

It is found in the cytoplasm. The protein resides in the nucleus. It localises to the cytoskeleton. The protein localises to the microtubule organizing center. Its subcellular location is the centrosome. It is found in the midbody. Its function is as follows. Significantly diminishes the chaperonin TCP1 complex ATPase activity, thus negatively impacts protein folding, including that of actin or tubulin. The protein is Thioredoxin domain-containing protein 9 (Txndc9) of Mus musculus (Mouse).